A 290-amino-acid chain; its full sequence is MTAATHTKAQVLAAALPWLKQLHGKIVVVKYGGNAMTDDTLKAAFAADMVFLRNCGVHPVVVHGGGPQISAMLKRLGIPGDFRGGFRVTTPEVLDVARMVLFGQVGRELVGLINAHGPYAVGITGEDAHLFTAVRRDVMVDGVATDIGLVGDVEHVNTEAVRDLIAAGRIPVVSTIAPDANGVVHNINADTAAAALAAALSAEKLLMLTDIEGLYTDWPDRNSLVSQINTADLTELLPTLEAGMVPKIEACLRAVTEGVPSAHVIDGRVEHCVLVELFTDEGTGTKVVNP.

Residues 65–66, Arg87, and Asn186 contribute to the substrate site; that span reads GG.

The protein belongs to the acetylglutamate kinase family. ArgB subfamily.

The protein resides in the cytoplasm. The catalysed reaction is N-acetyl-L-glutamate + ATP = N-acetyl-L-glutamyl 5-phosphate + ADP. The protein operates within amino-acid biosynthesis; L-arginine biosynthesis; N(2)-acetyl-L-ornithine from L-glutamate: step 2/4. Catalyzes the ATP-dependent phosphorylation of N-acetyl-L-glutamate. This is Acetylglutamate kinase from Mycobacterium sp. (strain JLS).